The chain runs to 595 residues: MKERSILRTLFLWRLINALSIRSFFQADEYWQSLEPAHVKAFGYGGLTWEWQHGLRSYAFPMLFEMSYYVAWILGVATRMALQGLAHATALCGAVVPSGAAGVAAMKAVWELPEAAQELVEYYGVLYGPRVVMAAVAACGEFYSVLLVRKLYLRVADKGDDQKGDAAPVSRLALMLTMTNFFNCFFATRTFINSFEMTLTAVALYHWDWSGGLDVGSLGFSASLAVAAFACLQRPTNVLIWAVLGLFLVLNLVRSRRWQLLLTLVAKVAAAGALAVCANIAIDYYFYGGVLLPLLRFIEFNVTTPLAAFYGRAPWHFHLLQSVPLIVGYALPFFVGALLTHNFRRGNAGLLGSPIMQIKCVVVLNIALYSCIDHKEFRFLYPLQPLFLSLSALEMHTWLQHHHARGTAWLKRVQSLLYVLPVLSITAALVLNTAHEAGVVSVMDYLHSAVPSAESIGFIMPCHSTPWQSHLHRNDLGKLWAISCQPPLDLLHQEDAGDQLLTYMDESDHLYENIPEFIHKNFPPVFRRDLRSPGRQYAYEWPEFLVVFEHMDEAFMKEYLKDSNYVEVKRFFNTLSHWDSRRAGDVIVYHKSPWY.

A run of 10 helical transmembrane segments spans residues 58–78 (YAFP…GVAT), 85–105 (LAHA…GVAA), 128–148 (GPRV…VLLV), 185–207 (FFAT…LYHW), 212–232 (GLDV…FACL), 235–255 (PTNV…LVRS), 260–280 (LLLT…CANI), 289–309 (GVLL…LAAF), 319–339 (LLQS…GALL), and 413–433 (VQSL…VLNT).

This sequence belongs to the glycosyltransferase 22 family. PIGB subfamily.

The protein localises to the endoplasmic reticulum membrane. Its pathway is glycolipid biosynthesis; glycosylphosphatidylinositol-anchor biosynthesis. Mannosyltransferase involved in glycosylphosphatidylinositol-anchor biosynthesis. Transfers the third mannose to Man2-GlcN-acyl-PI during GPI precursor assembly. This chain is GPI mannosyltransferase 3 (GPI10), found in Eremothecium gossypii (strain ATCC 10895 / CBS 109.51 / FGSC 9923 / NRRL Y-1056) (Yeast).